Here is a 332-residue protein sequence, read N- to C-terminus: tRNA-dihydrouridine synthase B (332 aa).

FMN-binding positions include 16–18 (PMA) and Q70. Residue C100 is the Proton donor of the active site. Residues K139, 200–202 (NGD), and 224–225 (GR) contribute to the FMN site.

The protein belongs to the Dus family. DusB subfamily. It depends on FMN as a cofactor.

It carries out the reaction a 5,6-dihydrouridine in tRNA + NAD(+) = a uridine in tRNA + NADH + H(+). The catalysed reaction is a 5,6-dihydrouridine in tRNA + NADP(+) = a uridine in tRNA + NADPH + H(+). In terms of biological role, catalyzes the synthesis of 5,6-dihydrouridine (D), a modified base found in the D-loop of most tRNAs, via the reduction of the C5-C6 double bond in target uridines. This chain is tRNA-dihydrouridine synthase B, found in Xanthomonas axonopodis pv. citri (strain 306).